Consider the following 149-residue polypeptide: Large ribosomal subunit protein uL11 (149 aa).

This sequence belongs to the universal ribosomal protein uL11 family. As to quaternary structure, part of the ribosomal stalk of the 50S ribosomal subunit. Interacts with L10 and the large rRNA to form the base of the stalk. L10 forms an elongated spine to which L12 dimers bind in a sequential fashion forming a multimeric L10(L12)X complex. Post-translationally, one or more lysine residues are methylated.

In terms of biological role, forms part of the ribosomal stalk which helps the ribosome interact with GTP-bound translation factors. The protein is Large ribosomal subunit protein uL11 of Methylobacterium radiotolerans (strain ATCC 27329 / DSM 1819 / JCM 2831 / NBRC 15690 / NCIMB 10815 / 0-1).